A 533-amino-acid polypeptide reads, in one-letter code: GDP-fucose protein O-fucosyltransferase 4 (533 aa).

The Cytoplasmic segment spans residues 1–20 (MSAGCTQLVWGGRLHWGASH). Residues 21–37 (LLSCLLALCALWVLAAA) traverse the membrane as a helical; Signal-anchor for type II membrane protein segment. Residues 38 to 533 (EPTEGGSANV…ETYIKRSMNH (496 aa)) are Lumenal-facing. N-linked (GlcNAc...) asparagine glycosylation is found at asparagine 148, asparagine 206, and asparagine 358. Cysteine 429 and cysteine 432 are oxidised to a cystine. Asparagine 511 carries N-linked (GlcNAc...) asparagine glycosylation.

Belongs to the glycosyltransferase 10 family.

Its subcellular location is the endoplasmic reticulum membrane. The enzyme catalyses L-threonyl-[protein] + GDP-beta-L-fucose = 3-O-(alpha-L-fucosyl)-L-threonyl-[protein] + GDP + H(+). It carries out the reaction L-seryl-[protein] + GDP-beta-L-fucose = 3-O-(alpha-L-fucosyl)-L-seryl-[protein] + GDP + H(+). The protein operates within protein modification; protein glycosylation. Its function is as follows. Protein O-fucosyltransferase that specifically catalyzes O-fucosylation of serine or threonine residues in EMI domains of target proteins. Attaches fucose through an O-glycosidic linkage. O-fucosylation of EMI domain-containing proteins may be required for facilitating protein folding and secretion. The protein is GDP-fucose protein O-fucosyltransferase 4 (fut11) of Xenopus tropicalis (Western clawed frog).